The following is a 303-amino-acid chain: Probable cell division protein WhiA (303 aa).

Residues 272–303 (SIQQLADSLSTPLTKSGVNHRLRKINKIADEL) constitute a DNA-binding region (H-T-H motif).

The protein belongs to the WhiA family.

Its function is as follows. Involved in cell division and chromosome segregation. This Streptococcus pneumoniae serotype 2 (strain D39 / NCTC 7466) protein is Probable cell division protein WhiA.